Reading from the N-terminus, the 398-residue chain is MQKRLTLLGSTGSIGDSTLDVVARHPERFSVYALTAHRNGDKLVEQCLRFAPEVAVVGDAATAAHVDAKLRAAGSKTVVLHGPQALVDVSKSDGCDTVVAAIVGAAGLAPSLAAARAGKRILLANKEALVMSGAIFMDAVRDHGAILLPVDSEHNAIFQCMPRDAAEHGGISKIILTASGGPFRTREPATLVDVTPDEACKHPNWVMGRKISVDSATMMNKGLEVIEAHWIFGLPGDRIDVLIHPQSVIHSLVSYRDGSVLAQLGNPDMRTPIAHALAFPERVDAGVDQLDLAQIAQLSFEKPDYARFPCLALALKALEEGGIASAALNAANEVAVEAFLERRIGFMAIAATVDAVLNTLPNRAPDGLDDVLAADAEARRLAAAIIAKAPAPRVERTV.

Thr11, Gly12, Ser13, Ile14, Arg38, Asn39, and Asn125 together coordinate NADPH. A 1-deoxy-D-xylulose 5-phosphate-binding site is contributed by Lys126. Glu127 contributes to the NADPH binding site. Asp151 is a Mn(2+) binding site. 4 residues coordinate 1-deoxy-D-xylulose 5-phosphate: Ser152, Glu153, Ser179, and His202. Glu153 is a binding site for Mn(2+). An NADPH-binding site is contributed by Gly208. Residues Ser215, Asn220, Lys221, and Glu224 each contribute to the 1-deoxy-D-xylulose 5-phosphate site. Glu224 serves as a coordination point for Mn(2+).

It belongs to the DXR family. The cofactor is Mg(2+). Mn(2+) is required as a cofactor.

The enzyme catalyses 2-C-methyl-D-erythritol 4-phosphate + NADP(+) = 1-deoxy-D-xylulose 5-phosphate + NADPH + H(+). The protein operates within isoprenoid biosynthesis; isopentenyl diphosphate biosynthesis via DXP pathway; isopentenyl diphosphate from 1-deoxy-D-xylulose 5-phosphate: step 1/6. In terms of biological role, catalyzes the NADPH-dependent rearrangement and reduction of 1-deoxy-D-xylulose-5-phosphate (DXP) to 2-C-methyl-D-erythritol 4-phosphate (MEP). In Burkholderia cenocepacia (strain HI2424), this protein is 1-deoxy-D-xylulose 5-phosphate reductoisomerase.